Reading from the N-terminus, the 199-residue chain is FMN-dependent NADH:quinone oxidoreductase (199 aa).

FMN-binding positions include 17–19 (SNS) and 87–90 (MYNF).

It belongs to the azoreductase type 1 family. As to quaternary structure, homodimer. FMN is required as a cofactor.

It catalyses the reaction 2 a quinone + NADH + H(+) = 2 a 1,4-benzosemiquinone + NAD(+). The enzyme catalyses N,N-dimethyl-1,4-phenylenediamine + anthranilate + 2 NAD(+) = 2-(4-dimethylaminophenyl)diazenylbenzoate + 2 NADH + 2 H(+). Its function is as follows. Quinone reductase that provides resistance to thiol-specific stress caused by electrophilic quinones. Functionally, also exhibits azoreductase activity. Catalyzes the reductive cleavage of the azo bond in aromatic azo compounds to the corresponding amines. This is FMN-dependent NADH:quinone oxidoreductase from Mycoplasma mycoides subsp. mycoides SC (strain CCUG 32753 / NCTC 10114 / PG1).